We begin with the raw amino-acid sequence, 404 residues long: Caspase-1 (404 aa).

The CARD domain occupies 1-91 (MADKVLKEKR…HLAGVLELST (91 aa)). Residues 1-119 (MADKVLKEKR…PFPAPQTVQD (119 aa)) constitute a propeptide that is removed on maturation. The interval 111-132 (FPAPQTVQDNPVKPASSEPRGS) is disordered. Catalysis depends on residues H237 and C285. A propeptide spanning residues 298–316 (SVGPSGNSSLLAAEDFEYD) is cleaved from the precursor. S302 carries the post-translational modification Phosphoserine.

Belongs to the peptidase C14A family. As to quaternary structure, heterotetramer that consists of two anti-parallel arranged heterodimers, each one formed by a 20 kDa (Caspase-1 subunit p20) and a 10 kDa (Caspase-1 subunit p10) subunit. May be a component of the inflammasome, a protein complex which also includes PYCARD, CARD8 and NLRP2 and whose function would be the activation of pro-inflammatory caspases. Component of the AIM2 PANoptosome complex, a multiprotein complex that drives inflammatory cell death (PANoptosis). Both the p10 and p20 subunits interact with MEFV. Interacts with CARD17P/INCA and CARD18. Interacts with SERPINB1; this interaction regulates CASP1 activity. Heterotetramer that consists of two anti-parallel arranged heterodimers, each one formed by a 20 kDa (Caspase-1 subunit p20) and a 10 kDa (Caspase-1 subunit p10) subunit. The two subunits are derived from the precursor sequence by an autocatalytic mechanism. In terms of processing, ubiquitinated via 'Lys-11'-linked polyubiquitination. Deubiquitinated by USP8.

It is found in the cytoplasm. It localises to the cell membrane. It catalyses the reaction Strict requirement for an Asp residue at position P1 and has a preferred cleavage sequence of Tyr-Val-Ala-Asp-|-.. Thiol protease involved in a variety of inflammatory processes by proteolytically cleaving other proteins, such as the precursors of the inflammatory cytokines interleukin-1 beta (IL1B) and interleukin 18 (IL18) as well as the pyroptosis inducer Gasdermin-D (GSDMD), into active mature peptides. Plays a key role in cell immunity as an inflammatory response initiator: once activated through formation of an inflammasome complex, it initiates a pro-inflammatory response through the cleavage of the two inflammatory cytokines IL1B and IL18, releasing the mature cytokines which are involved in a variety of inflammatory processes. Cleaves a tetrapeptide after an Asp residue at position P1. Also initiates pyroptosis, a programmed lytic cell death pathway, through cleavage of GSDMD. In contrast to cleavage of interleukin IL1B, recognition and cleavage of GSDMD is not strictly dependent on the consensus cleavage site but depends on an exosite interface on CASP1 that recognizes and binds the Gasdermin-D, C-terminal (GSDMD-CT) part. Cleaves and activates CASP7 in response to bacterial infection, promoting plasma membrane repair. Upon inflammasome activation, during DNA virus infection but not RNA virus challenge, controls antiviral immunity through the cleavage of CGAS, rendering it inactive. In apoptotic cells, cleaves SPHK2 which is released from cells and remains enzymatically active extracellularly. This Sus scrofa (Pig) protein is Caspase-1 (CASP1).